Consider the following 207-residue polypeptide: Small ribosomal subunit protein uS4 (207 aa).

Residues 31 to 40 (KCRLDNKPGQ) show a composition bias toward basic and acidic residues. Residues 31 to 56 (KCRLDNKPGQDGRTSGSRTSDYGNQL) form a disordered region. The segment covering 42-53 (GRTSGSRTSDYG) has biased composition (polar residues). Residues 97 to 158 (SRLDNVVYRM…KAKKQARITE (62 aa)) form the S4 RNA-binding domain.

It belongs to the universal ribosomal protein uS4 family. Part of the 30S ribosomal subunit. Contacts protein S5. The interaction surface between S4 and S5 is involved in control of translational fidelity.

In terms of biological role, one of the primary rRNA binding proteins, it binds directly to 16S rRNA where it nucleates assembly of the body of the 30S subunit. Its function is as follows. With S5 and S12 plays an important role in translational accuracy. This is Small ribosomal subunit protein uS4 from Polynucleobacter necessarius subsp. necessarius (strain STIR1).